Reading from the N-terminus, the 198-residue chain is Nascent polypeptide-associated complex subunit alpha (198 aa).

An NAC-A/B domain is found at 48-113 (ITRVVLKRTR…QAAAETGSVS (66 aa)). Residues 159–198 (LEDSDIKLVMEQANVSRNKAINGLKKNDSDVVNTIMDLCK) form the UBA domain.

It belongs to the NAC-alpha family. In terms of assembly, part of the nascent polypeptide-associated complex (NAC), consisting of EGD2 and EGD1. NAC associates with ribosomes via EGD1.

Its subcellular location is the cytoplasm. The protein localises to the nucleus. In terms of biological role, component of the nascent polypeptide-associated complex (NAC), a dynamic component of the ribosomal exit tunnel, protecting the emerging polypeptides from interaction with other cytoplasmic proteins to ensure appropriate nascent protein targeting. The NAC complex also promotes mitochondrial protein import by enhancing productive ribosome interactions with the outer mitochondrial membrane and blocks the inappropriate interaction of ribosomes translating non-secretory nascent polypeptides with translocation sites in the membrane of the endoplasmic reticulum. EGD2 may also be involved in transcription regulation. The sequence is that of Nascent polypeptide-associated complex subunit alpha (EGD2) from Yarrowia lipolytica (strain CLIB 122 / E 150) (Yeast).